The following is a 145-amino-acid chain: Hemoglobin subunit beta (145 aa).

One can recognise a Globin domain in the interval 1 to 145 (MLTAEEKAAV…VANALAHRYH (145 aa)). T11 carries the phosphothreonine modification. S43 carries the phosphoserine modification. Position 58 is an N6-acetyllysine (K58). Residue H62 participates in heme b binding. K81 is subject to N6-acetyllysine. Position 91 (H91) interacts with heme b. C92 is subject to S-nitrosocysteine.

It belongs to the globin family. In terms of assembly, heterotetramer of two alpha chains and two beta chains. As to expression, red blood cells.

Functionally, involved in oxygen transport from the lung to the various peripheral tissues. The sequence is that of Hemoglobin subunit beta (HBB) from Bos mutus grunniens (Wild yak).